The sequence spans 392 residues: MWLANFFVSASTTMIVPFLSLYIETLSSFSNGFVQRWSGYVFGITFLMAFLVSPFWGRFGDKRGYKKILMATGTGIALSIFFMGFVTSVYQLFFLRMAMGLVTGFIPTSLAMISAQTPKSSAGKTLGTLQMGQVSGSLFGPLLGGMLADRFGFTYTFFITSFVIFSSVLLVLFGVKEKHLAEKTAKRTSYSRKEVLSYIFHHPALWVMMLLTMLIQTGNFSIQPLLALYVNELHGPVNLAFFSGMAFSATGLGSLLLARKWGDLGDRYGHRRILIGLLLAASFFFIPQALASSLSVLLVFRFLFGMAMGGLLPCITAAIRVQAPGSIQGEVLGYNVSFRFLGNVLGPLLGGIISSHFTISATFYVTAFLFFAGACMLWIMQKLRKDSYAKAS.

Helical transmembrane passes span 2–23, 38–60, 73–95, 153–175, 195–217, 237–259, 272–291, 297–319, 331–353, and 357–379; these read WLAN…SLYI, SGYV…GRFG, GTGI…LFFL, FTYT…LFGV, VLSY…LIQT, VNLA…LLAR, RILI…QALA, LLVF…TAAI, VLGY…GGII, and FTIS…MLWI.

Belongs to the major facilitator superfamily.

Its subcellular location is the cell membrane. This is an uncharacterized protein from Bacillus subtilis (strain 168).